We begin with the raw amino-acid sequence, 185 residues long: Transposon Tn3 resolvase (185 aa).

A Resolvase/invertase-type recombinase catalytic domain is found at arginine 2–glycine 137. The active-site O-(5'-phospho-DNA)-serine intermediate is serine 10. A DNA-binding region (H-T-H motif) is located at residues alanine 161–glutamate 180.

Belongs to the site-specific recombinase resolvase family.

Its function is as follows. Resolvase catalyzes the resolution (a site-specific recombination) of the cointegrated replicon to yield the final transposition products. This Escherichia coli protein is Transposon Tn3 resolvase (tnpR).